The chain runs to 254 residues: 5'/3'-nucleotidase SurE (254 aa).

A divalent metal cation is bound by residues Asp-9, Asp-10, Ser-40, and Asn-93.

The protein belongs to the SurE nucleotidase family. Requires a divalent metal cation as cofactor.

It localises to the cytoplasm. It catalyses the reaction a ribonucleoside 5'-phosphate + H2O = a ribonucleoside + phosphate. It carries out the reaction a ribonucleoside 3'-phosphate + H2O = a ribonucleoside + phosphate. The enzyme catalyses [phosphate](n) + H2O = [phosphate](n-1) + phosphate + H(+). Nucleotidase with a broad substrate specificity as it can dephosphorylate various ribo- and deoxyribonucleoside 5'-monophosphates and ribonucleoside 3'-monophosphates with highest affinity to 3'-AMP. Also hydrolyzes polyphosphate (exopolyphosphatase activity) with the preference for short-chain-length substrates (P20-25). Might be involved in the regulation of dNTP and NTP pools, and in the turnover of 3'-mononucleotides produced by numerous intracellular RNases (T1, T2, and F) during the degradation of various RNAs. The polypeptide is 5'/3'-nucleotidase SurE (Yersinia pseudotuberculosis serotype O:1b (strain IP 31758)).